Reading from the N-terminus, the 97-residue chain is Citrate lyase acyl carrier protein (97 aa).

Ser14 carries the O-(phosphoribosyl dephospho-coenzyme A)serine modification.

This sequence belongs to the CitD family. As to quaternary structure, oligomer with a subunit composition of (alpha,beta,gamma)6.

It localises to the cytoplasm. Its function is as follows. Covalent carrier of the coenzyme of citrate lyase. This is Citrate lyase acyl carrier protein from Yersinia enterocolitica serotype O:8 / biotype 1B (strain NCTC 13174 / 8081).